The chain runs to 31 residues: Hemocyanin subunit 1 (31 aa).

Belongs to the tyrosinase family. Hemocyanin subfamily. As to expression, hemolymph.

The protein localises to the secreted. Its subcellular location is the extracellular space. Its function is as follows. Hemocyanins are copper-containing oxygen carriers occurring freely dissolved in the hemolymph of many mollusks and arthropods. The protein is Hemocyanin subunit 1 of Homarus americanus (American lobster).